A 595-amino-acid chain; its full sequence is Leiomodin-1 (595 aa).

Disordered regions lie at residues 1–69 (MSKV…EAML), 81–322 (QREM…KVKN), and 467–568 (DKQR…QEKN). S12 is modified (phosphoserine). Acidic residues predominate over residues 27–40 (EEMEELEKELDVVD). Basic and acidic residues-rich tracts occupy residues 81–110 (QREM…DASR), 117–127 (QDSDLGKEPKK), 134–192 (FSRD…EKTG), 200–223 (SRDK…KLTA), 230–249 (GRRE…KPED), 257–287 (RDWR…KAPE), 467–476 (DKQRQKRLQE), and 484–493 (SGEKKDRLEV). S85 carries the post-translational modification Phosphoserine. S135 carries the phosphoserine modification. Tandem repeats lie at residues 165–179 (AAVD…GREE), 180–195 (RAAA…GSVK), 196–211 (NAGL…EEVK), 212–226 (EPSK…AESR), 227–240 (NTVG…LKES), 242–255 (KENK…IGSG), 256–271 (GRDW…KEEN), and 272–288 (QPDK…APEK). Residues 165–288 (AAVDRKESGK…EESKTKAPEK (124 aa)) form an 8 X approximate tandem repeats region. The interval 503 to 522 (SPKPSPQPSPKPAPKNSPKK) is 5 X 4 AA approximate tandem repeats. Composition is skewed to pro residues over residues 505–517 (KPSP…PAPK) and 527–538 (AAPPPPPPPLAP). S550 carries the post-translational modification Phosphoserine. Positions 569 to 588 (SRDQLLAAIRSSNLKQLKKV) constitute a WH2 domain.

Belongs to the tropomodulin family. Detected in aorta, urinary bladder and uterus (at protein level). Detected in smooth muscle cells. Detected in aorta, bladder, colon, intestine, stomach and uterus.

It is found in the cytoplasm. Its subcellular location is the myofibril. The protein localises to the sarcomere. The protein resides in the cytoskeleton. Its function is as follows. Required for proper contractility of visceral smooth muscle cells. Mediates nucleation of actin filaments. This is Leiomodin-1 (Lmod1) from Mus musculus (Mouse).